The chain runs to 81 residues: MQIIPESPEVDLDKLLEKVKEVIKDYGEYYKHEVEPLAFGLKSLIVYFLIPETSFNEEQFLDNIKQIEEVSDAEILMATRA.

It belongs to the EF-1-beta/EF-1-delta family.

Promotes the exchange of GDP for GTP in EF-1-alpha/GDP, thus allowing the regeneration of EF-1-alpha/GTP that could then be used to form the ternary complex EF-1-alpha/GTP/AAtRNA. This is Elongation factor 1-beta from Nanoarchaeum equitans (strain Kin4-M).